We begin with the raw amino-acid sequence, 279 residues long: Genome polyprotein (279 aa).

It belongs to the potyviridae genome polyprotein family. Post-translationally, genome polyprotein of potyviruses undergoes post-translational proteolytic processing by the main proteinase NIa-pro resulting in the production of at least ten individual proteins. The P1 proteinase and the HC-pro cleave only their respective C-termini autocatalytically. 6K1 is essential for proper proteolytic separation of P3 from CI.

It is found in the virion. It catalyses the reaction RNA(n) + a ribonucleoside 5'-triphosphate = RNA(n+1) + diphosphate. Functionally, an RNA-dependent RNA polymerase that plays an essential role in the virus replication. In terms of biological role, involved in aphid transmission, cell-to-cell and systemis movement, encapsidation of the viral RNA and in the regulation of viral RNA amplification. This is Genome polyprotein from Solanum betaceum (Tamarillo).